The following is a 151-amino-acid chain: uncharacterized protein (151 aa).

The interval 123–151 (PAGQNAGTGPAQKLKTDETRCYERRGGSQ) is disordered. Positions 136–151 (LKTDETRCYERRGGSQ) are enriched in basic and acidic residues.

This is an uncharacterized protein from Triticum aestivum (Wheat).